Consider the following 290-residue polypeptide: Pyridoxal kinase PdxY (290 aa).

Substrate-binding positions include Ser-9 and 44–45 (TQ). Asp-112, Val-144, Glu-149, and Lys-182 together coordinate ATP. Asp-221 provides a ligand contact to substrate.

It belongs to the pyridoxine kinase family. PdxY subfamily. As to quaternary structure, homodimer. Mg(2+) is required as a cofactor.

The enzyme catalyses pyridoxal + ATP = pyridoxal 5'-phosphate + ADP + H(+). It functions in the pathway cofactor metabolism; pyridoxal 5'-phosphate salvage; pyridoxal 5'-phosphate from pyridoxal: step 1/1. Functionally, pyridoxal kinase involved in the salvage pathway of pyridoxal 5'-phosphate (PLP). Catalyzes the phosphorylation of pyridoxal to PLP. The sequence is that of Pyridoxal kinase PdxY from Vibrio vulnificus (strain CMCP6).